The sequence spans 119 residues: Protein phosphatase EYA4 (119 aa).

The protein belongs to the HAD-like hydrolase superfamily. EYA family. The cofactor is Mg(2+).

The protein resides in the cytoplasm. Its subcellular location is the nucleus. It catalyses the reaction O-phospho-L-tyrosyl-[protein] + H2O = L-tyrosyl-[protein] + phosphate. In terms of biological role, tyrosine phosphatase that specifically dephosphorylates 'Tyr-142' of histone H2AX (H2AXY142ph). 'Tyr-142' phosphorylation of histone H2AX plays a central role in DNA repair and acts as a mark that distinguishes between apoptotic and repair responses to genotoxic stress. Promotes efficient DNA repair by dephosphorylating H2AX, promoting the recruitment of DNA repair complexes containing MDC1. Its function as histone phosphatase probably explains its role in transcription regulation during organogenesis. May be involved in development of the eye. This chain is Protein phosphatase EYA4 (EYA4), found in Gallus gallus (Chicken).